Here is a 79-residue protein sequence, read N- to C-terminus: Small ribosomal subunit protein bS21 (79 aa).

The tract at residues 58 to 79 (ARKKMQREGLLPMKPKPMPGMR) is disordered.

The protein belongs to the bacterial ribosomal protein bS21 family.

This is Small ribosomal subunit protein bS21 from Beijerinckia indica subsp. indica (strain ATCC 9039 / DSM 1715 / NCIMB 8712).